The chain runs to 521 residues: Cytoplasmic polyadenylation element-binding protein 2 (521 aa).

Residues 1–11 (MNLPQQQPPAA) show a composition bias toward pro residues. Disordered stretches follow at residues 1-35 (MNLPQQQPPAAAPQQPQSRRSPVSPQLQQQHQAAA) and 50-88 (PLLKQSPWSNHQNSGWGTASMSWGAMHGRDHRRSGNMGI). Residues 12–35 (APQQPQSRRSPVSPQLQQQHQAAA) are compositionally biased toward low complexity. S21 bears the Phosphoserine mark. Residues 55 to 70 (SPWSNHQNSGWGTASM) show a composition bias toward polar residues. RRM domains are found at residues 264 to 355 (RKVF…PWNL) and 372 to 454 (KTIF…PYVL).

The protein belongs to the RRM CPEB family. In terms of assembly, interacts with TENT2/GLD2. Expressed in embryo, cerebellum, salivary gland, thymus, heart, liver, lung, spleen, kidney, intestine, ovary and round spermatids. Weakly expressed in granular cells of dentate gyrus and the pyramidal cells of CA3 and CA1 of the hippocampus.

Its subcellular location is the cytoplasm. May play a role in translational regulation of stored mRNAs in transcriptionally inactive haploid spermatids. Binds to poly(U) RNA oligomers. Required for cell cycle progression, specifically for the transition from metaphase to anaphase. The chain is Cytoplasmic polyadenylation element-binding protein 2 (Cpeb2) from Mus musculus (Mouse).